A 57-amino-acid chain; its full sequence is Small ribosomal subunit protein bS21 (57 aa).

Residues 32–57 are disordered; that stretch reads VRKRKHFEKPSVKRKKKSEAARKRKF. Residues 33–57 show a composition bias toward basic residues; the sequence is RKRKHFEKPSVKRKKKSEAARKRKF.

Belongs to the bacterial ribosomal protein bS21 family.

The chain is Small ribosomal subunit protein bS21 from Shouchella clausii (strain KSM-K16) (Alkalihalobacillus clausii).